Consider the following 427-residue polypeptide: Glutamate-1-semialdehyde 2,1-aminomutase 2 (427 aa).

N6-(pyridoxal phosphate)lysine is present on Lys267.

Belongs to the class-III pyridoxal-phosphate-dependent aminotransferase family. HemL subfamily. As to quaternary structure, homodimer. Pyridoxal 5'-phosphate is required as a cofactor.

The protein localises to the cytoplasm. It carries out the reaction (S)-4-amino-5-oxopentanoate = 5-aminolevulinate. Its pathway is porphyrin-containing compound metabolism; protoporphyrin-IX biosynthesis; 5-aminolevulinate from L-glutamyl-tRNA(Glu): step 2/2. In Staphylococcus saprophyticus subsp. saprophyticus (strain ATCC 15305 / DSM 20229 / NCIMB 8711 / NCTC 7292 / S-41), this protein is Glutamate-1-semialdehyde 2,1-aminomutase 2.